A 273-amino-acid chain; its full sequence is Thiazole synthase (273 aa).

Lys-110 serves as the catalytic Schiff-base intermediate with DXP. 1-deoxy-D-xylulose 5-phosphate contacts are provided by residues Gly-171, 197-198, and 219-220; these read AG and NT. Residues 251 to 273 are disordered; the sequence is MAAQDSAQPSTPVLGTPFWHHAP.

This sequence belongs to the ThiG family. Homotetramer. Forms heterodimers with either ThiH or ThiS.

It localises to the cytoplasm. It carries out the reaction [ThiS sulfur-carrier protein]-C-terminal-Gly-aminoethanethioate + 2-iminoacetate + 1-deoxy-D-xylulose 5-phosphate = [ThiS sulfur-carrier protein]-C-terminal Gly-Gly + 2-[(2R,5Z)-2-carboxy-4-methylthiazol-5(2H)-ylidene]ethyl phosphate + 2 H2O + H(+). Its pathway is cofactor biosynthesis; thiamine diphosphate biosynthesis. Its function is as follows. Catalyzes the rearrangement of 1-deoxy-D-xylulose 5-phosphate (DXP) to produce the thiazole phosphate moiety of thiamine. Sulfur is provided by the thiocarboxylate moiety of the carrier protein ThiS. In vitro, sulfur can be provided by H(2)S. The chain is Thiazole synthase from Variovorax paradoxus (strain S110).